The following is a 203-amino-acid chain: Outer-membrane lipoprotein LolB (203 aa).

Positions Met-1–Gly-21 are cleaved as a signal peptide. Cys-22 carries N-palmitoyl cysteine lipidation. Residue Cys-22 is the site of S-diacylglycerol cysteine attachment.

This sequence belongs to the LolB family. Monomer.

It is found in the cell outer membrane. Its function is as follows. Plays a critical role in the incorporation of lipoproteins in the outer membrane after they are released by the LolA protein. The protein is Outer-membrane lipoprotein LolB of Halorhodospira halophila (strain DSM 244 / SL1) (Ectothiorhodospira halophila (strain DSM 244 / SL1)).